The sequence spans 303 residues: Recombination-associated protein RdgC (303 aa).

Belongs to the RdgC family.

Its subcellular location is the cytoplasm. It localises to the nucleoid. In terms of biological role, may be involved in recombination. The sequence is that of Recombination-associated protein RdgC from Shewanella piezotolerans (strain WP3 / JCM 13877).